We begin with the raw amino-acid sequence, 788 residues long: Cadherin-related family member 4 (788 aa).

A signal peptide spans 1–16 (MVLLRLLVFLFAPVVS). Residues 17-686 (DLCSLPCFIN…DTEAFWQPQP (670 aa)) are Extracellular-facing. Cadherin domains lie at 237–338 (LEQA…PPRC), 339–449 (LPAL…APRT), 444–554 (ACAP…EPPF), and 551–674 (EPPF…TPML). Asn242 carries N-linked (GlcNAc...) asparagine glycosylation. A helical membrane pass occupies residues 687-707 (WFVVVLTATGALLLLALGWLL). At 708-788 (GRLLQGLAQL…NTHTGARRWL (81 aa)) the chain is on the cytoplasmic side.

The protein localises to the membrane. Cadherins are calcium-dependent cell adhesion proteins. They preferentially interact with themselves in a homophilic manner in connecting cells; cadherins may thus contribute to the sorting of heterogeneous cell types. The chain is Cadherin-related family member 4 (CDHR4) from Homo sapiens (Human).